A 707-amino-acid polypeptide reads, in one-letter code: Polyribonucleotide nucleotidyltransferase (707 aa).

Mg(2+)-binding residues include aspartate 488 and aspartate 494. In terms of domain architecture, KH spans 554–613 (PRLFTMKINQDKIREVIGKGGETIRSITAETGTEINIAEDGTITIAATTQEAGDAAKKRI). One can recognise an S1 motif domain in the interval 623 to 693 (GKVYEGTVVK…DRGRVRLSIK (71 aa)).

Belongs to the polyribonucleotide nucleotidyltransferase family. The cofactor is Mg(2+).

It localises to the cytoplasm. It carries out the reaction RNA(n+1) + phosphate = RNA(n) + a ribonucleoside 5'-diphosphate. Its function is as follows. Involved in mRNA degradation. Catalyzes the phosphorolysis of single-stranded polyribonucleotides processively in the 3'- to 5'-direction. The sequence is that of Polyribonucleotide nucleotidyltransferase from Neisseria meningitidis serogroup B (strain ATCC BAA-335 / MC58).